A 138-amino-acid chain; its full sequence is Growth factor (138 aa).

A signal peptide spans 1–19 (MSMKYLMLLFAAMIIRSFA). N-linked (GlcNAc...) asparagine; by host glycosylation is present at asparagine 34. The region spanning 41-81 (AIRLCGPEGDGYCLHGDCIHARDIDGMYCRCSHGYTGIRCQ) is the EGF-like domain. 3 cysteine pairs are disulfide-bonded: cysteine 45/cysteine 58, cysteine 53/cysteine 69, and cysteine 71/cysteine 80. An N-linked (GlcNAc...) asparagine; by host glycan is attached at asparagine 95.

Belongs to the orthopoxvirus OPG019 family.

It localises to the secreted. Its function is as follows. Stimulates cellular proliferation (hyperplasia)and mobility around infected cells to promote rapid and efficient spread of infection. The protein is Growth factor (OPG019) of Rabbitpox virus (strain Utrecht) (RPV).